The sequence spans 630 residues: tRNA uridine 5-carboxymethylaminomethyl modification enzyme MnmG (630 aa).

13-18 (GGGHAG) is an FAD binding site. Residue 273 to 287 (GPRYCPSIEDKIHRF) participates in NAD(+) binding.

The protein belongs to the MnmG family. Homodimer. Heterotetramer of two MnmE and two MnmG subunits. Requires FAD as cofactor.

The protein resides in the cytoplasm. Its function is as follows. NAD-binding protein involved in the addition of a carboxymethylaminomethyl (cmnm) group at the wobble position (U34) of certain tRNAs, forming tRNA-cmnm(5)s(2)U34. The polypeptide is tRNA uridine 5-carboxymethylaminomethyl modification enzyme MnmG (Pseudomonas aeruginosa (strain ATCC 15692 / DSM 22644 / CIP 104116 / JCM 14847 / LMG 12228 / 1C / PRS 101 / PAO1)).